Here is an 864-residue protein sequence, read N- to C-terminus: Leukocyte tyrosine kinase receptor (864 aa).

The N-terminal stretch at 1-16 (MGCWGQLLVWFGAAGA) is a signal peptide. At 17-424 (ILCSSPGSQE…CMDLHKPPGP (408 aa)) the chain is on the extracellular side. Positions 30–40 (RSSPLPLASPS) are enriched in low complexity. Residues 30–64 (RSSPLPLASPSPRDPKVSAPPSILEPASPLNSPGT) form a disordered region. Disulfide bonds link cysteine 73-cysteine 86 and cysteine 168-cysteine 179. The disordered stretch occupies residues 239 to 297 (YLRPRDRGRTQASPEKLENRSEAPGSGGRGGAAGGGGGWTSRAPSPQAGRSLQEGAEGG). Residues 241 to 259 (RPRDRGRTQASPEKLENRS) show a composition bias toward basic and acidic residues. The N-linked (GlcNAc...) asparagine glycan is linked to asparagine 257. Over residues 263–277 (GSGGRGGAAGGGGGW) the composition is skewed to gly residues. Cysteine 300 and cysteine 322 are disulfide-bonded. Residues asparagine 380 and asparagine 412 are each glycosylated (N-linked (GlcNAc...) asparagine). Residues 425 to 449 (LVLMVAVVATSTLSLLMVCGVLILV) form a helical membrane-spanning segment. The Cytoplasmic portion of the chain corresponds to 450-864 (KQKKWQGLQE…QNLWNPTYRS (415 aa)). Residues 510 to 786 (VTLLRALGHG…LQYCTQDPDV (277 aa)) enclose the Protein kinase domain. ATP contacts are provided by residues 516 to 524 (LGHGAFGEV) and lysine 544. Residue aspartate 643 is the Proton acceptor of the active site. Tyrosine 676 bears the Phosphotyrosine; by autocatalysis mark. Disordered stretches follow at residues 790 to 830 (LLPM…KLKS) and 842 to 864 (SGLK…TYRS). Residues 852–864 (LQPQNLWNPTYRS) are compositionally biased toward polar residues.

This sequence belongs to the protein kinase superfamily. Tyr protein kinase family. Insulin receptor subfamily. In terms of assembly, homodimer; homodimerizes following ligand-binding. Part of a complex including LTK, TNK2 and GRB2, in which GRB2 promotes LTK recruitment by TNK2. In terms of processing, phosphorylated at tyrosine residues by autocatalysis, which activates kinase activity. As to expression, expressed in non-hematopoietic cell lines and T- and B-cell lines.

It is found in the cell membrane. It catalyses the reaction L-tyrosyl-[protein] + ATP = O-phospho-L-tyrosyl-[protein] + ADP + H(+). With respect to regulation, activated by ligand-binding, leading to homodimerization and autophosphorylation. Its function is as follows. Receptor with a tyrosine-protein kinase activity. Following activation by ALKAL1 or ALKAL2 ligands at the cell surface, transduces an extracellular signal into an intracellular response. Ligand-binding to the extracellular domain induces tyrosine kinase activation, leading to activation of the mitogen-activated protein kinase (MAPK) pathway. Phosphorylates almost exclusively at the first tyrosine of the Y-x-x-x-Y-Y motif. The exact function of this protein is not known; studies with chimeric proteins demonstrate its ability to promote growth and specifically neurite outgrowth, and cell survival. Involved in regulation of the secretory pathway involving endoplasmic reticulum (ER) export sites (ERESs) and ER to Golgi transport. The protein is Leukocyte tyrosine kinase receptor of Homo sapiens (Human).